A 380-amino-acid polypeptide reads, in one-letter code: 1-deoxy-D-xylulose 5-phosphate reductoisomerase (380 aa).

Residues Thr-10, Gly-11, Ser-12, Ile-13, Gly-35, and Asn-121 each contribute to the NADPH site. Residue Lys-122 participates in 1-deoxy-D-xylulose 5-phosphate binding. Glu-123 provides a ligand contact to NADPH. Asp-147 contacts Mn(2+). Positions 148, 149, 173, and 196 each coordinate 1-deoxy-D-xylulose 5-phosphate. Residue Glu-149 participates in Mn(2+) binding. Gly-202 provides a ligand contact to NADPH. 1-deoxy-D-xylulose 5-phosphate-binding residues include Ser-209, Asn-214, Lys-215, and Glu-218. Glu-218 lines the Mn(2+) pocket.

This sequence belongs to the DXR family. Mg(2+) is required as a cofactor. Mn(2+) serves as cofactor.

It catalyses the reaction 2-C-methyl-D-erythritol 4-phosphate + NADP(+) = 1-deoxy-D-xylulose 5-phosphate + NADPH + H(+). It functions in the pathway isoprenoid biosynthesis; isopentenyl diphosphate biosynthesis via DXP pathway; isopentenyl diphosphate from 1-deoxy-D-xylulose 5-phosphate: step 1/6. Its function is as follows. Catalyzes the NADPH-dependent rearrangement and reduction of 1-deoxy-D-xylulose-5-phosphate (DXP) to 2-C-methyl-D-erythritol 4-phosphate (MEP). The sequence is that of 1-deoxy-D-xylulose 5-phosphate reductoisomerase from Lachnospira eligens (strain ATCC 27750 / DSM 3376 / VPI C15-48 / C15-B4) (Eubacterium eligens).